A 467-amino-acid chain; its full sequence is UDP-N-acetylmuramoylalanine--D-glutamate ligase (467 aa).

118-124 serves as a coordination point for ATP; that stretch reads GTNGKTT.

It belongs to the MurCDEF family.

It is found in the cytoplasm. It catalyses the reaction UDP-N-acetyl-alpha-D-muramoyl-L-alanine + D-glutamate + ATP = UDP-N-acetyl-alpha-D-muramoyl-L-alanyl-D-glutamate + ADP + phosphate + H(+). The protein operates within cell wall biogenesis; peptidoglycan biosynthesis. In terms of biological role, cell wall formation. Catalyzes the addition of glutamate to the nucleotide precursor UDP-N-acetylmuramoyl-L-alanine (UMA). This is UDP-N-acetylmuramoylalanine--D-glutamate ligase from Streptomyces avermitilis (strain ATCC 31267 / DSM 46492 / JCM 5070 / NBRC 14893 / NCIMB 12804 / NRRL 8165 / MA-4680).